Consider the following 856-residue polypeptide: Envelope glycoprotein GP350 (856 aa).

At 1–809 the chain is on the virion surface side; the sequence is MEAALLVCQY…TSQPRFSNLS (809 aa). Residues Asn-47, Asn-87, Asn-114, Asn-166, Asn-169, Asn-195, Asn-229, Asn-277, Asn-318, Asn-328, Asn-345, Asn-356, Asn-378, Asn-386, Asn-411, Asn-435, Asn-443, Asn-457, Asn-497, Asn-519, Asn-533, Asn-554, Asn-568, Asn-582, Asn-585, Asn-603, and Asn-614 are each glycosylated (N-linked (GlcNAc...) asparagine; by host). The interval 421 to 779 is disordered; sequence FSKAPESTTT…PPSTSSELRP (359 aa). Residues 427–437 are compositionally biased toward low complexity; that stretch reads STTTSPTSNTT. The span at 442 to 488 shows a compositional bias: polar residues; that stretch reads PNTTTGLPSSTHVPTNLTAPASTGPTVSTADVTSPTPAGTTSGASPV. Residues 507–570 show a composition bias toward low complexity; the sequence is TSPTPAVTTP…AVTTPTPNAT (64 aa). Residues 575–616 are compositionally biased toward polar residues; it reads GETSPQANTTNHTLGGTSSTPVVTSQPKNATSAVTTGQHNIT. The segment covering 617 to 631 has biased composition (low complexity); the sequence is SSSTSSMSLRPSSIS. Asn-650 carries N-linked (GlcNAc...) asparagine; by host glycosylation. Positions 654–669 are enriched in low complexity; the sequence is VTPASTSTHHVSTSSP. Residues 674–690 show a composition bias toward polar residues; it reads GTTSQASGPGNSSTSTK. N-linked (GlcNAc...) asparagine; by host glycans are attached at residues Asn-684, Asn-695, Asn-704, and Asn-729. Polar residues predominate over residues 703–730; it reads KNATSPQAPSGQKTAVPTVTSTGGKANS. Residues 731–741 are compositionally biased toward low complexity; the sequence is TTGGKHTTGHG. Over residues 743 to 776 the composition is skewed to polar residues; sequence RTSTEPTTDYGGDSTTPRTRYNATTYLPPSTSSE. N-linked (GlcNAc...) asparagine; by host glycosylation is found at Asn-764 and Asn-807. The chain crosses the membrane as a helical span at residues 810-830; it reads MLVLQWASLAVLTLLLLLVMA. The Intravirion segment spans residues 831-856; it reads DCAFRRNLSTSHTYTTPPYDDAETYV.

Belongs to the Epstein-Barr GP350 family. As to quaternary structure, interacts with host CR2. Extensively glycosylated.

The protein resides in the virion membrane. The protein localises to the host membrane. Its function is as follows. Initiates virion attachment to host B-lymphocyte cell, leading to virus entry. Acts by binding to host CR2 at the surface of B-lymphocytes, facilitating the binding of viral glycoprotein gp42 to HLA class II molecules. Attachment triggers virion-host membrane fusion and invasion of the host cell. This chain is Envelope glycoprotein GP350, found in Homo sapiens (Human).